The chain runs to 230 residues: Ribonuclease 3 (230 aa).

An RNase III domain is found at 6–135 (TTELKERYGI…FLGALYLDQK (130 aa)). E48 is a binding site for Mg(2+). The active site involves D52. The Mg(2+) site is built by D121 and E124. The active site involves E124. The region spanning 161 to 230 (DHKTQLQEVL…AERALKSIPQ (70 aa)) is the DRBM domain.

The protein belongs to the ribonuclease III family. In terms of assembly, homodimer. The cofactor is Mg(2+).

Its subcellular location is the cytoplasm. It catalyses the reaction Endonucleolytic cleavage to 5'-phosphomonoester.. Its function is as follows. Digests double-stranded RNA. Involved in the processing of primary rRNA transcript to yield the immediate precursors to the large and small rRNAs (23S and 16S). Processes some mRNAs, and tRNAs when they are encoded in the rRNA operon. Processes pre-crRNA and tracrRNA of type II CRISPR loci if present in the organism. The polypeptide is Ribonuclease 3 (Enterococcus faecalis (strain ATCC 700802 / V583)).